A 387-amino-acid chain; its full sequence is Oxidase FUB9 (387 aa).

Residues 1-20 (MSRTNLPIQPAKMSDATSSK) are disordered. Positions 18-379 (SSKPQIFSIQ…TPAHLSLLNA (362 aa)) constitute an FMN hydroxy acid dehydrogenase domain. Y44 contacts a 2-oxocarboxylate. 3 residues coordinate FMN: S126, Q150, and T178. R187 lines the a 2-oxocarboxylate pocket. K250 provides a ligand contact to FMN. The Proton acceptor role is filled by H274. R277 contacts a 2-oxocarboxylate. FMN is bound by residues 305–309 (DGGFR) and 328–329 (GR).

It belongs to the FMN-dependent alpha-hydroxy acid dehydrogenase family. Requires FMN as cofactor.

Its pathway is mycotoxin biosynthesis. In terms of biological role, oxidase; part of the gene cluster that mediates the biosynthesis of fusaric acid, a mycotoxin with low to moderate toxicity to animals and humans, but with high phytotoxic properties. L-aspartate is suggested as fusaric acid amino acid precursor that is activated and further processed to O-acetyl-L-homoserine by cluster enzymes aspartate kinase FUB3 and homoserine O-acetyltransferase FUB5, as well as enzymes of the primary metabolism. The polyketide synthase (PKS) FUB1 generates the triketide trans-2-hexenal which is presumptively released by the hydrolase FUB4 and linked to the NRPS-bound amino acid precursor by NAD(P)-dependent dehydrogenase FUB6. FUB1, FUB4, and the non-canonical NRPS Fub8 may form an enzyme complex. Further processing of the NRPS-bound intermediate might be carried out by FUB6 and the sulfhydrylase FUB7, enabling a spontaneous electrocyclization to close the carbon backbone of fusaric acid. Dihydrofusaric acid is likely to be released via reduction by the thioester reductase (TR) domain of FUB8 whereupon the final oxidation to fusaric acid may (also) be performed by the FMN-dependent dehydrogenase FUB9. This is Oxidase FUB9 from Gibberella moniliformis (strain M3125 / FGSC 7600) (Maize ear and stalk rot fungus).